The following is a 336-amino-acid chain: D-erythrose-4-phosphate dehydrogenase (336 aa).

NAD(+) is bound at residue 11–12 (RI). Substrate-binding positions include 153-155 (SCT), arginine 199, 212-213 (TR), and arginine 235. The Nucleophile role is filled by cysteine 154. Asparagine 317 is a binding site for NAD(+).

The protein belongs to the glyceraldehyde-3-phosphate dehydrogenase family. Epd subfamily. As to quaternary structure, homotetramer.

It localises to the cytoplasm. The enzyme catalyses D-erythrose 4-phosphate + NAD(+) + H2O = 4-phospho-D-erythronate + NADH + 2 H(+). The protein operates within cofactor biosynthesis; pyridoxine 5'-phosphate biosynthesis; pyridoxine 5'-phosphate from D-erythrose 4-phosphate: step 1/5. Its function is as follows. Catalyzes the NAD-dependent conversion of D-erythrose 4-phosphate to 4-phosphoerythronate. The protein is D-erythrose-4-phosphate dehydrogenase of Alteromonas mediterranea (strain DSM 17117 / CIP 110805 / LMG 28347 / Deep ecotype).